Consider the following 388-residue polypeptide: Alanine racemase (388 aa).

The active-site Proton acceptor; specific for D-alanine is lysine 44. Lysine 44 is modified (N6-(pyridoxal phosphate)lysine). Arginine 142 is a substrate binding site. The active-site Proton acceptor; specific for L-alanine is the tyrosine 273. Methionine 321 is a binding site for substrate.

It belongs to the alanine racemase family. Pyridoxal 5'-phosphate serves as cofactor.

The catalysed reaction is L-alanine = D-alanine. The protein operates within amino-acid biosynthesis; D-alanine biosynthesis; D-alanine from L-alanine: step 1/1. Its function is as follows. Catalyzes the interconversion of L-alanine and D-alanine. May also act on other amino acids. The protein is Alanine racemase (alr) of Mycobacterium avium (strain 104).